A 159-amino-acid chain; its full sequence is Small ribosomal subunit protein uS7 (159 aa).

It belongs to the universal ribosomal protein uS7 family. As to quaternary structure, part of the 30S ribosomal subunit. Contacts proteins S9 and S11.

Functionally, one of the primary rRNA binding proteins, it binds directly to 16S rRNA where it nucleates assembly of the head domain of the 30S subunit. Is located at the subunit interface close to the decoding center, probably blocks exit of the E-site tRNA. The chain is Small ribosomal subunit protein uS7 from Endomicrobium trichonymphae.